Consider the following 256-residue polypeptide: MQGPWLMMALALIFVLTGIPKSCALLEAAQEEGAVTPDLPGLEKVQVRPERRFLRKDLQRVRGDLGAALDSWITKRQHPGKREEKEEDVEAEERGDLGEVGAWRPHKRQHPGRRANQDKDSWSDEGDSDWLPPSWLPDFFLDSWFSDAPQVKRQHPGRRSFPWMESDVTKRQHPGRRFIDPELQRSWEETEGEEGGLMPEKRQHPGKRAVGHPCGPQGICGQTGLLQLLGDLSRGQETLAKQTPQLEAWVREPLEE.

An N-terminal signal peptide occupies residues 1–24 (MQGPWLMMALALIFVLTGIPKSCA). Disordered regions lie at residues 76–128 (RQHP…EGDS) and 151–215 (VKRQ…HPCG). Residues P79, P111, P156, and P174 each carry the proline amide modification. Positions 104-113 (RPHKRQHPGR) are enriched in basic residues. Residues 177 to 188 (RFIDPELQRSWE) show a composition bias toward basic and acidic residues. P205 carries the post-translational modification Proline amide.

The protein belongs to the TRH family. As to expression, specifically expressed in hypothalamus and testis.

Its subcellular location is the secreted. In terms of biological role, functions as a regulator of the biosynthesis of TSH in the anterior pituitary gland and as a neurotransmitter/ neuromodulator in the central and peripheral nervous systems. The protein is Pro-thyrotropin-releasing hormone (Trh) of Mus musculus (Mouse).